The primary structure comprises 431 residues: Histidinol dehydrogenase (431 aa).

Positions 127, 189, and 212 each coordinate NAD(+). 3 residues coordinate substrate: serine 237, glutamine 259, and histidine 262. Glutamine 259 and histidine 262 together coordinate Zn(2+). Active-site proton acceptor residues include glutamate 326 and histidine 327. Residues histidine 327, aspartate 360, glutamate 414, and histidine 419 each coordinate substrate. Residue aspartate 360 participates in Zn(2+) binding. Histidine 419 is a binding site for Zn(2+).

This sequence belongs to the histidinol dehydrogenase family. Zn(2+) serves as cofactor.

The catalysed reaction is L-histidinol + 2 NAD(+) + H2O = L-histidine + 2 NADH + 3 H(+). Its pathway is amino-acid biosynthesis; L-histidine biosynthesis; L-histidine from 5-phospho-alpha-D-ribose 1-diphosphate: step 9/9. In terms of biological role, catalyzes the sequential NAD-dependent oxidations of L-histidinol to L-histidinaldehyde and then to L-histidine. The chain is Histidinol dehydrogenase from Xanthomonas campestris pv. campestris (strain 8004).